Here is a 263-residue protein sequence, read N- to C-terminus: DNA repair protein RecO (263 aa).

Residues 243-263 (DRKETARETVPTSDGTASNAV) form a disordered region. A compositionally biased stretch (polar residues) spans 252–263 (VPTSDGTASNAV).

Belongs to the RecO family.

Its function is as follows. Involved in DNA repair and RecF pathway recombination. This Neisseria meningitidis serogroup C / serotype 2a (strain ATCC 700532 / DSM 15464 / FAM18) protein is DNA repair protein RecO.